The following is a 724-amino-acid chain: MKSAKGIENLAFVPSSPDILRRLSASPSQVEVSALSSDPQRENSQPQELQKPQEPQKSPEPSLPSAPPNVSEEKLRSLSLSDFEEGPYGWRNFHPQCLQRCNTPGGFLLHYCLLAVTQGIVVNGLVNISISTIEKRYEMKSSLTGLISSSYDISFCLLSLFVSFFGERGHKPRWLAFAAFMIGLGALVFSLPQFFSGEYKLGSLFEDTCVTTRNSTSCTSSTSSLSNYLYVFILGQLLLGAGGTPLYTLGTAFLDDSVPTHKSSLYIGTGYAMSILGPAIGYVLGGQLLTIYVDVAMGESTDITEDDPRWLGAWWIGFLLSWIFAWSLIIPFSCFPKHLPGTAEIQAGKTSQAHQSNSNADAKFGKSIKDFPAALKNLMKNAVFMCLVLSTSSEALITTGFATFLPKFIENQFGLTSSFAATLGGAVLIPGAALGQILGGFLVSKFKMTCKNTMKFALFTSGVALTLSFVFIYAKCGNEPFAGVSESYNGTGELGNLIAPCNANCNCLRSYYYPVCGDGVQYFSPCFAGCSNSVAHRKPKVYYNCSCIERKTETTSTAETFGFEAKAGKCETHCAKLPIFLCIFFIVIIFTFMAGTPITVSILRCVNHRQRSLALGIQFMVLRLLGTIPGPIIFGFTIDSTCILWDINDCGIKGACRIYDNIKMAHMLVAISVTCKVITMFFNGFAIFLYKPPPSATDLSFHKENAVVTNVLAEQDLNKIVKEG.

Residues 1 to 105 (MKSAKGIENL…QCLQRCNTPG (105 aa)) lie on the Cytoplasmic side of the membrane. 5 positions are modified to phosphoserine: S15, S16, S24, S26, and S28. The tract at residues 24-71 (SASPSQVEVSALSSDPQRENSQPQELQKPQEPQKSPEPSLPSAPPNVS) is disordered. A compositionally biased stretch (polar residues) spans 25 to 38 (ASPSQVEVSALSSD). Low complexity predominate over residues 44–60 (SQPQELQKPQEPQKSPE). A helical transmembrane segment spans residues 106-126 (GFLLHYCLLAVTQGIVVNGLV). Residues 127–145 (NISISTIEKRYEMKSSLTG) lie on the Extracellular side of the membrane. A helical membrane pass occupies residues 146–166 (LISSSYDISFCLLSLFVSFFG). The Cytoplasmic portion of the chain corresponds to 167 to 172 (ERGHKP). Residues 173-197 (RWLAFAAFMIGLGALVFSLPQFFSG) traverse the membrane as a helical segment. Residues 198–224 (EYKLGSLFEDTCVTTRNSTSCTSSTSS) are Extracellular-facing. Residues 225–254 (LSNYLYVFILGQLLLGAGGTPLYTLGTAFL) form a helical membrane-spanning segment. The Cytoplasmic segment spans residues 255-274 (DDSVPTHKSSLYIGTGYAMS). The chain crosses the membrane as a helical span at residues 275-295 (ILGPAIGYVLGGQLLTIYVDV). The Extracellular segment spans residues 296-311 (AMGESTDITEDDPRWL). A helical membrane pass occupies residues 312 to 336 (GAWWIGFLLSWIFAWSLIIPFSCFP). Residues 337–377 (KHLPGTAEIQAGKTSQAHQSNSNADAKFGKSIKDFPAALKN) lie on the Cytoplasmic side of the membrane. Residues 378–399 (LMKNAVFMCLVLSTSSEALITT) traverse the membrane as a helical segment. The Extracellular segment spans residues 400–419 (GFATFLPKFIENQFGLTSSF). The helical transmembrane segment at 420–443 (AATLGGAVLIPGAALGQILGGFLV) threads the bilayer. The Cytoplasmic portion of the chain corresponds to 444 to 447 (SKFK). Residues 448–471 (MTCKNTMKFALFTSGVALTLSFVF) traverse the membrane as a helical segment. The Extracellular segment spans residues 472-580 (IYAKCGNEPF…ETHCAKLPIF (109 aa)). The 55-residue stretch at 495-549 (GNLIAPCNANCNCLRSYYYPVCGDGVQYFSPCFAGCSNSVAHRKPKVYYNCSCIE) folds into the Kazal-like domain. Disulfide bonds link C501–C530, C507–C526, and C516–C547. Residues 581 to 603 (LCIFFIVIIFTFMAGTPITVSIL) form a helical membrane-spanning segment. At 604-612 (RCVNHRQRS) the chain is on the cytoplasmic side. Residues 613–638 (LALGIQFMVLRLLGTIPGPIIFGFTI) form a helical membrane-spanning segment. Topologically, residues 639–672 (DSTCILWDINDCGIKGACRIYDNIKMAHMLVAIS) are extracellular. A helical transmembrane segment spans residues 673-690 (VTCKVITMFFNGFAIFLY). At 691–724 (KPPPSATDLSFHKENAVVTNVLAEQDLNKIVKEG) the chain is on the cytoplasmic side.

It belongs to the organo anion transporter (TC 2.A.60) family.

It is found in the basolateral cell membrane. It carries out the reaction estrone 3-sulfate(out) = estrone 3-sulfate(in). The enzyme catalyses L-thyroxine(out) = L-thyroxine(in). The catalysed reaction is 3,3',5-triiodo-L-thyronine(out) = 3,3',5-triiodo-L-thyronine(in). It catalyses the reaction chenodeoxycholate(out) = chenodeoxycholate(in). It carries out the reaction glycocholate(out) = glycocholate(in). The enzyme catalyses L-homoarginine(in) = L-homoarginine(out). The catalysed reaction is L-arginine(in) = L-arginine(out). It catalyses the reaction N(omega),N(omega)-dimethyl-L-arginine(out) = N(omega),N(omega)-dimethyl-L-arginine(in). In terms of biological role, mediates the transport of organic anions such as steroids (estrone 3-sulfate, chenodeoxycholate, glycocholate) and thyroid hormones (3,3',5-triiodo-L-thyronine (T3), L-thyroxine (T4)), in the kidney. Capable of transporting cAMP and pharmacological substances such as digoxin, ouabain and methotrexate. Transport is independent of sodium, chloride ion, and ATP. Transport activity is stimulated by an acidic extracellular environment due to increased substrate affinity to the transporter. The driving force for this transport activity is currently not known. The role of hydrogencarbonate (HCO3(-), bicarbonate) as the probable counteranion that exchanges for organic anions is still not well defined. Functions as an uptake transporter at the apical membrane, suggesting a role in renal reabsorption. Involved in the renal secretion of the uremic toxin ADMA (N(omega),N(omega)-dimethyl-L-arginine or asymmetrical dimethylarginine), which is associated to cardiovascular events and mortality, and the structurally related amino acids L-arginine and L-homoarginine (a cardioprotective biomarker). Can act bidirectionally, suggesting a dual protective role of this transport protein; exporting L-homoarginine after being synthesized in proximal tubule cells, and mediating uptake of ADMA from the blood into proximal tubule cells where it is degraded by the enzyme dimethylarginine dimethylaminohydrolase 1 (DDAH1). May be involved in sperm maturation by enabling directed movement of organic anions and compounds within or between cells. This ion-transporting process is important to maintain the strict epididymal homeostasis necessary for sperm maturation. May have a role in secretory functions since seminal vesicle epithelial cells are assumed to secrete proteins involved in decapacitation by modifying surface proteins to facilitate the acquisition of the ability to fertilize the egg. The chain is Solute carrier organic anion transporter family member 4C1 from Pongo abelii (Sumatran orangutan).